Here is a 218-residue protein sequence, read N- to C-terminus: MLFISATNTNAGKTTCARLLAQYCNACGVRTILLKPIETGVNDTTNHFSDVHLFLQDNRLLDRSLTLKDISFYRYAKASAPLIAQQEENQNAPIDTNDLIQRLQNFTKTYDLVIVEGAGGLCVPITLEENMLDLALKLKAKILVISHDNLGLINDCLLNDFLLKSHQLDYKIAINLRENNAAFHSVSLPYIELFNERSNNPIVIFQQSLKELMSFALK.

Residue 10-15 (NAGKTT) participates in ATP binding. Residue T14 coordinates Mg(2+). K35 is a catalytic residue. T39 contributes to the substrate binding site. Residues H52 and E116 each contribute to the Mg(2+) site. Residues 116–119 (EGAG) and 176–177 (LR) contribute to the ATP site.

The protein belongs to the dethiobiotin synthetase family. In terms of assembly, homodimer. Mg(2+) serves as cofactor.

The protein resides in the cytoplasm. The catalysed reaction is (7R,8S)-7,8-diammoniononanoate + CO2 + ATP = (4R,5S)-dethiobiotin + ADP + phosphate + 3 H(+). Its pathway is cofactor biosynthesis; biotin biosynthesis; biotin from 7,8-diaminononanoate: step 1/2. Its function is as follows. Catalyzes a mechanistically unusual reaction, the ATP-dependent insertion of CO2 between the N7 and N8 nitrogen atoms of 7,8-diaminopelargonic acid (DAPA, also called 7,8-diammoniononanoate) to form a ureido ring. The chain is ATP-dependent dethiobiotin synthetase BioD from Helicobacter pylori (strain Shi470).